Here is a 496-residue protein sequence, read N- to C-terminus: Lysine--tRNA ligase (496 aa).

Mg(2+)-binding residues include glutamate 409 and glutamate 416.

The protein belongs to the class-II aminoacyl-tRNA synthetase family. In terms of assembly, homodimer. The cofactor is Mg(2+).

The protein resides in the cytoplasm. It catalyses the reaction tRNA(Lys) + L-lysine + ATP = L-lysyl-tRNA(Lys) + AMP + diphosphate. This chain is Lysine--tRNA ligase, found in Streptococcus suis (strain 05ZYH33).